The sequence spans 328 residues: MTQQAKEPKFIKNGIYRKDAVPVRDKKPEWLKVTIPTGQVYGEVRKIVKEHRLHTVCEEAMCPNIGECWSRGTATFMLMGHICTRACRFCAVDTGNPMGKLDLEEPAHVAESVRLMGLKYVVLTSVDRDDLPDGGAYHFAKTVTAIKRENPGTRVEALTPDFGGNPHCVDLVLESGVDVYAQNLETVRRLTHPVRDIRASYERTLGVLKHAKQSRPDVITKTSIMLGLGETREELREAMLDCRAHGVDVITFGQYLRPTMHHLPVERYVSPAEFDEIREEGLSLGFLEVVAGPLVRSSYKAEQIVMDKPGNLPEHLAHLEGKEQLSLI.

Cys-57, Cys-62, Cys-68, Cys-83, Cys-87, Cys-90, and Ser-298 together coordinate [4Fe-4S] cluster. A Radical SAM core domain is found at 69–287 (WSRGTATFML…REEGLSLGFL (219 aa)).

This sequence belongs to the radical SAM superfamily. Lipoyl synthase family. [4Fe-4S] cluster is required as a cofactor.

It is found in the cytoplasm. It carries out the reaction [[Fe-S] cluster scaffold protein carrying a second [4Fe-4S](2+) cluster] + N(6)-octanoyl-L-lysyl-[protein] + 2 oxidized [2Fe-2S]-[ferredoxin] + 2 S-adenosyl-L-methionine + 4 H(+) = [[Fe-S] cluster scaffold protein] + N(6)-[(R)-dihydrolipoyl]-L-lysyl-[protein] + 4 Fe(3+) + 2 hydrogen sulfide + 2 5'-deoxyadenosine + 2 L-methionine + 2 reduced [2Fe-2S]-[ferredoxin]. It participates in protein modification; protein lipoylation via endogenous pathway; protein N(6)-(lipoyl)lysine from octanoyl-[acyl-carrier-protein]: step 2/2. In terms of biological role, catalyzes the radical-mediated insertion of two sulfur atoms into the C-6 and C-8 positions of the octanoyl moiety bound to the lipoyl domains of lipoate-dependent enzymes, thereby converting the octanoylated domains into lipoylated derivatives. This Deinococcus geothermalis (strain DSM 11300 / CIP 105573 / AG-3a) protein is Lipoyl synthase.